The sequence spans 425 residues: Glutamyl-tRNA reductase (425 aa).

Substrate is bound by residues 49-52, Ser107, 112-114, and Gln118; these read TCNR and EPQ. Cys50 acts as the Nucleophile in catalysis. 187-192 is an NADP(+) binding site; sequence GAGETI.

This sequence belongs to the glutamyl-tRNA reductase family. In terms of assembly, homodimer.

It catalyses the reaction (S)-4-amino-5-oxopentanoate + tRNA(Glu) + NADP(+) = L-glutamyl-tRNA(Glu) + NADPH + H(+). It functions in the pathway porphyrin-containing compound metabolism; protoporphyrin-IX biosynthesis; 5-aminolevulinate from L-glutamyl-tRNA(Glu): step 1/2. Its function is as follows. Catalyzes the NADPH-dependent reduction of glutamyl-tRNA(Glu) to glutamate 1-semialdehyde (GSA). The chain is Glutamyl-tRNA reductase from Pseudomonas putida (strain GB-1).